Reading from the N-terminus, the 768-residue chain is Post-transcriptional regulator MKT1 (768 aa).

Belongs to the XPG/RAD2 endonuclease family. Interacts with PBP1.

It is found in the cytoplasm. The protein resides in the cytosol. In terms of biological role, involved in 3'-UTR mediated RNA regulation. Complexes with PBP1 to promote mRNA interactions with poly(A)-binding protein. In Cryptococcus neoformans var. grubii serotype A (strain H99 / ATCC 208821 / CBS 10515 / FGSC 9487) (Filobasidiella neoformans var. grubii), this protein is Post-transcriptional regulator MKT1.